Here is a 47-residue protein sequence, read N- to C-terminus: Large ribosomal subunit protein bL36B (47 aa).

The protein belongs to the bacterial ribosomal protein bL36 family.

In Pectobacterium atrosepticum (strain SCRI 1043 / ATCC BAA-672) (Erwinia carotovora subsp. atroseptica), this protein is Large ribosomal subunit protein bL36B.